The primary structure comprises 331 residues: Ketol-acid reductoisomerase (NADP(+)) (331 aa).

The KARI N-terminal Rossmann domain maps to 2–182 (AKMYYDKDAD…GGTRAGVIET (181 aa)). Residues 25–28 (FGSQ), serine 51, serine 53, and 83–86 (DEKQ) each bind NADP(+). Residue histidine 108 is part of the active site. Glycine 134 contributes to the NADP(+) binding site. A KARI C-terminal knotted domain is found at 183-328 (TFKEETETDL…KGLREMMAWI (146 aa)). Mg(2+) is bound by residues aspartate 191, glutamate 195, glutamate 227, and glutamate 231. Residue serine 252 participates in substrate binding.

Belongs to the ketol-acid reductoisomerase family. The cofactor is Mg(2+).

The catalysed reaction is (2R)-2,3-dihydroxy-3-methylbutanoate + NADP(+) = (2S)-2-acetolactate + NADPH + H(+). It carries out the reaction (2R,3R)-2,3-dihydroxy-3-methylpentanoate + NADP(+) = (S)-2-ethyl-2-hydroxy-3-oxobutanoate + NADPH + H(+). It participates in amino-acid biosynthesis; L-isoleucine biosynthesis; L-isoleucine from 2-oxobutanoate: step 2/4. It functions in the pathway amino-acid biosynthesis; L-valine biosynthesis; L-valine from pyruvate: step 2/4. Its function is as follows. Involved in the biosynthesis of branched-chain amino acids (BCAA). Catalyzes an alkyl-migration followed by a ketol-acid reduction of (S)-2-acetolactate (S2AL) to yield (R)-2,3-dihydroxy-isovalerate. In the isomerase reaction, S2AL is rearranged via a Mg-dependent methyl migration to produce 3-hydroxy-3-methyl-2-ketobutyrate (HMKB). In the reductase reaction, this 2-ketoacid undergoes a metal-dependent reduction by NADPH to yield (R)-2,3-dihydroxy-isovalerate. The sequence is that of Ketol-acid reductoisomerase (NADP(+)) from Thermoanaerobacter sp. (strain X514).